The following is a 1118-amino-acid chain: Sodium-driven chloride bicarbonate exchanger (1118 aa).

Disordered stretches follow at residues 1–23 (MEIK…EEAV), 58–96 (GRKS…DTPS), 245–312 (KQSE…PPHQ), and 457–476 (NGTA…GPEL). Residues 1–509 (MEIKDQGAQM…DFRDAFSLQC (509 aa)) are Cytoplasmic-facing. Residues 59–76 (RKSHRRHRHRGHKHRKRD) show a composition bias toward basic residues. The span at 77–90 (RERDSGLEDGRESP) shows a compositional bias: basic and acidic residues. Serine 89 is subject to Phosphoserine. Threonine 94 is subject to Phosphothreonine. Positions 248–264 (EPNSMDKNAGQVVSPQS) are enriched in polar residues. Serine 276 bears the Phosphoserine mark. A helical transmembrane segment spans residues 510-530 (LASFLFLYCACMSPVITFGGL). Over 531-538 (LGEATEGR) the chain is Extracellular. A helical transmembrane segment spans residues 539–559 (ISAIESLFGASMTGIAYSLFG). Topologically, residues 560–562 (GQP) are cytoplasmic. The helical transmembrane segment at 563-583 (LTILGSTGPVLVFEKILFKFC) threads the bilayer. Over 584–596 (KEYGLSYLSLRAS) the chain is Extracellular. A helical transmembrane segment spans residues 597–617 (IGLWTATLCIILVATDASSLV). Topologically, residues 618–626 (CYITRFTEE) are cytoplasmic. The chain crosses the membrane as a helical span at residues 627–647 (AFASLICIIFIYEALEKLFEL). Topologically, residues 648 to 720 (SEAYPINMHN…VGRACGHDHP (73 aa)) are extracellular. N-linked (GlcNAc...) asparagine glycosylation is found at asparagine 674, asparagine 677, asparagine 687, and asparagine 697. A helical membrane pass occupies residues 721-741 (YVPDVLFWSVILFFSTVTLSA). Over 742–762 (TLKQFKTSRYFPTKVRSIVSD) the chain is Cytoplasmic. Residues 763–783 (FAVFLTILCMVLIDYAIGIPS) form a helical membrane-spanning segment. The Extracellular segment spans residues 784 to 809 (PKLQVPSVFKPTRDDRGWFVTPLGPN). The helical transmembrane segment at 810–830 (PWWTVIAAIIPALLCTILIFM) threads the bilayer. The Cytoplasmic segment spans residues 831–855 (DQQITAVIINRKEHKLKKGCGYHLD). The chain crosses the membrane as a helical span at residues 856–876 (LLMVAVMLGVCSIMGLPWFVA). The Extracellular segment spans residues 877-912 (ATVLSITHVNSLKLESECSAPGEQPKFLGIREQRVT). A helical transmembrane segment spans residues 913–933 (GLMIFILMGSSVFMTSILKFI). The Cytoplasmic portion of the chain corresponds to 934-935 (PM). The helical transmembrane segment at 936–956 (PVLYGVFLYMGASSLKGIQFF) threads the bilayer. Residues 957-998 (DRIKLFWMPAKHQPDFIYLRHVPLRKVHLFTIIQMSCLGLLW) are Extracellular-facing. A helical transmembrane segment spans residues 999–1019 (IIKVSRAAIVFPMMVLALVFV). Over 1020-1118 (RKLMDLLFTK…SSFPSKSSPS (99 aa)) the chain is Cytoplasmic. 2 positions are modified to phosphoserine: serine 1057 and serine 1085.

Belongs to the anion exchanger (TC 2.A.31) family. Predominantly expressed in the brain.

It localises to the basolateral cell membrane. It is found in the apical cell membrane. The protein resides in the cell projection. The protein localises to the dendrite. Its subcellular location is the axon. It localises to the perikaryon. It is found in the presynapse. The protein resides in the postsynapse. The catalysed reaction is 2 hydrogencarbonate(out) + chloride(in) + Na(+)(out) = 2 hydrogencarbonate(in) + chloride(out) + Na(+)(in). Its function is as follows. Sodium/bicarbonate cotransporter which plays an important role in regulating intracellular pH. Has been shown to act as a sodium/bicarbonate cotransporter in exchange for intracellular chloride. Has also been shown to act as a sodium/biocarbonate cotransporter which does not couple net influx of bicarbonate to net efflux of chloride, with the observed chloride efflux being due to chloride self-exchange. Controls neuronal pH and may contribute to the secretion of cerebrospinal fluid. Acting on presynaptic intracellular pH, it promotes GABA release, reduces the excitability of CA1 pyramidal neurons, and modulates short-term synaptic plasticity. Required in retinal cells to maintain normal pH which is necessary for normal vision. In the kidney, likely to mediate bicarbonate reclamation in the apical membrane of the proximal tubules. This is Sodium-driven chloride bicarbonate exchanger from Homo sapiens (Human).